Reading from the N-terminus, the 60-residue chain is Large ribosomal subunit protein bL32 (60 aa).

Residues 1 to 16 (MAVPKRKTSPSKRGMR) show a composition bias toward basic residues. Positions 1–60 (MAVPKRKTSPSKRGMRRSADALKAPTYVEDKNSGEMRRPHHIDLKTGMYRGRQVLTPKES) are disordered. A compositionally biased stretch (basic and acidic residues) spans 28-44 (VEDKNSGEMRRPHHIDL).

This sequence belongs to the bacterial ribosomal protein bL32 family.

In Mesorhizobium japonicum (strain LMG 29417 / CECT 9101 / MAFF 303099) (Mesorhizobium loti (strain MAFF 303099)), this protein is Large ribosomal subunit protein bL32.